A 414-amino-acid chain; its full sequence is Alanine--glyoxylate aminotransferase (414 aa).

The N-terminal 23 residues, 1-23 (MFQALAKASAALGPRAAGWVRTM), are a transit peptide targeting the mitochondrion. At K231 the chain carries N6-(pyridoxal phosphate)lysine. N6-acetyllysine is present on residues K256 and K334. R382 serves as a coordination point for substrate.

The protein belongs to the class-V pyridoxal-phosphate-dependent aminotransferase family. As to quaternary structure, homodimer. Pyridoxal 5'-phosphate is required as a cofactor.

The protein resides in the peroxisome. It is found in the mitochondrion matrix. The enzyme catalyses L-serine + pyruvate = 3-hydroxypyruvate + L-alanine. It carries out the reaction glyoxylate + L-alanine = glycine + pyruvate. Catalyzes the transamination of glyoxylate to glycine and contributes to the glyoxylate detoxification. Functionally, catalyzes the transamination between L-serine and pyruvate and weakly contributes to gluconeogenesis from the L-serine metabolism. In Callithrix jacchus (White-tufted-ear marmoset), this protein is Alanine--glyoxylate aminotransferase.